The chain runs to 122 residues: Basic phospholipase A2 homolog myotoxin II (122 aa).

Disulfide bonds link Cys26–Cys116, Cys28–Cys44, Cys43–Cys95, Cys49–Cys122, Cys50–Cys88, Cys57–Cys81, and Cys75–Cys86. The tract at residues Lys105–Lys118 is important for membrane-damaging activities in eukaryotes and bacteria; heparin-binding.

The protein belongs to the phospholipase A2 family. Group II subfamily. K49 sub-subfamily. In terms of assembly, homodimer; non-covalently linked (probable alternative/compact dimer conformation). Expressed by the venom gland.

The protein localises to the secreted. Its activity is regulated as follows. Myotoxic activity is inhibited by suramin and rosmarinic acid. Cytotoxic and myotoxic activities are inhibited by pre-incubation with varespladib. Suramin inhibits this myotoxin by (i) direct blockage of the MDoS and MDiS, preventing the toxin/membrane interaction and disruption and (ii) formation of an oligomeric complex, resulting in a tetrameric configuration for which both MDoS and MDiS becomes physically inaccessible, thus avoiding any possibility of toxin-membrane interaction or disruption. Heparin completely inhibits the cytotoxic and bactericidal activities, but only partially the myotoxic, edema-inducing and lethal effects. Its function is as follows. Snake venom phospholipase A2 (PLA2) homolog that lacks enzymatic activity. Shows high myotoxin activities. Also shows neurotoxicity, since it induces muscle paralysis when tested on mouse phrenic-diaphragm preparations. Displays edema-inducing activities. Also displays antimicrobial activity against E.coli and C.albicans, as well as antitumoral activity against some human and mice cell lines. In addition, it is effective as parasiticidal agent against Leishmania sp. and S.mansoni. It also disrupts negatively charged liposomes in a dose- and temperature-dependent manner and shows toxicity by intraperitoneal route. In contrast to other phospholipase A2-like toxins, this myotoxin does not require fatty acid binding to be active. The sequence is that of Basic phospholipase A2 homolog myotoxin II from Bothrops moojeni (Lance-headed viper).